A 384-amino-acid chain; its full sequence is S-adenosylmethionine synthase (384 aa).

Histidine 15 contributes to the ATP binding site. Aspartate 17 contacts Mg(2+). Residue glutamate 43 coordinates K(+). L-methionine-binding residues include glutamate 56 and glutamine 99. A flexible loop region spans residues 99 to 109 (QSPDINQGVDR). Residues 164-166 (DAK), 230-231 (RF), aspartate 239, 245-246 (RK), alanine 262, and lysine 266 each bind ATP. Aspartate 239 is a binding site for L-methionine. L-methionine is bound at residue lysine 270.

This sequence belongs to the AdoMet synthase family. As to quaternary structure, homotetramer; dimer of dimers. Mg(2+) serves as cofactor. K(+) is required as a cofactor.

It is found in the cytoplasm. The enzyme catalyses L-methionine + ATP + H2O = S-adenosyl-L-methionine + phosphate + diphosphate. The protein operates within amino-acid biosynthesis; S-adenosyl-L-methionine biosynthesis; S-adenosyl-L-methionine from L-methionine: step 1/1. Functionally, catalyzes the formation of S-adenosylmethionine (AdoMet) from methionine and ATP. The overall synthetic reaction is composed of two sequential steps, AdoMet formation and the subsequent tripolyphosphate hydrolysis which occurs prior to release of AdoMet from the enzyme. The chain is S-adenosylmethionine synthase from Salmonella choleraesuis (strain SC-B67).